The sequence spans 244 residues: UDP-2,3-diacylglucosamine hydrolase (244 aa).

Positions 8, 10, 41, 79, and 114 each coordinate Mn(2+). Residue 79-80 (NR) coordinates substrate. 5 residues coordinate substrate: Asp-122, Ser-160, Asn-164, Lys-167, and His-195. 2 residues coordinate Mn(2+): His-195 and His-197.

Belongs to the LpxH family. Requires Mn(2+) as cofactor.

It is found in the cell inner membrane. It carries out the reaction UDP-2-N,3-O-bis[(3R)-3-hydroxytetradecanoyl]-alpha-D-glucosamine + H2O = 2-N,3-O-bis[(3R)-3-hydroxytetradecanoyl]-alpha-D-glucosaminyl 1-phosphate + UMP + 2 H(+). The protein operates within glycolipid biosynthesis; lipid IV(A) biosynthesis; lipid IV(A) from (3R)-3-hydroxytetradecanoyl-[acyl-carrier-protein] and UDP-N-acetyl-alpha-D-glucosamine: step 4/6. Its function is as follows. Hydrolyzes the pyrophosphate bond of UDP-2,3-diacylglucosamine to yield 2,3-diacylglucosamine 1-phosphate (lipid X) and UMP by catalyzing the attack of water at the alpha-P atom. Involved in the biosynthesis of lipid A, a phosphorylated glycolipid that anchors the lipopolysaccharide to the outer membrane of the cell. This is UDP-2,3-diacylglucosamine hydrolase from Hahella chejuensis (strain KCTC 2396).